A 569-amino-acid chain; its full sequence is Protein misato homolog 1 (569 aa).

Phosphoserine occurs at positions 41 and 495.

It belongs to the misato family.

Its subcellular location is the mitochondrion outer membrane. The protein localises to the cytoplasm. In terms of biological role, involved in the regulation of mitochondrial distribution and morphology. Required for mitochondrial fusion and mitochondrial network formation. The sequence is that of Protein misato homolog 1 (MSTO1) from Macaca fascicularis (Crab-eating macaque).